A 315-amino-acid polypeptide reads, in one-letter code: Glycerol-3-phosphate dehydrogenase [NAD(P)+] (315 aa).

Positions 24, 44, 45, and 92 each coordinate NADPH. Sn-glycerol 3-phosphate is bound by residues Lys-92 and Gly-120. Ser-124 is a binding site for NADPH. Lys-175, Asp-228, Ser-238, Arg-239, and Asn-240 together coordinate sn-glycerol 3-phosphate. The active-site Proton acceptor is Lys-175. Arg-239 lines the NADPH pocket. Glu-265 lines the NADPH pocket.

The protein belongs to the NAD-dependent glycerol-3-phosphate dehydrogenase family.

Its subcellular location is the cytoplasm. It carries out the reaction sn-glycerol 3-phosphate + NAD(+) = dihydroxyacetone phosphate + NADH + H(+). The enzyme catalyses sn-glycerol 3-phosphate + NADP(+) = dihydroxyacetone phosphate + NADPH + H(+). The protein operates within membrane lipid metabolism; glycerophospholipid metabolism. Its function is as follows. Catalyzes the reduction of the glycolytic intermediate dihydroxyacetone phosphate (DHAP) to sn-glycerol 3-phosphate (G3P), the key precursor for phospholipid synthesis. The chain is Glycerol-3-phosphate dehydrogenase [NAD(P)+] from Synechococcus sp. (strain JA-2-3B'a(2-13)) (Cyanobacteria bacterium Yellowstone B-Prime).